A 450-amino-acid chain; its full sequence is Phosphoglucosamine mutase 2 (450 aa).

Ser101 functions as the Phosphoserine intermediate in the catalytic mechanism. Mg(2+) is bound by residues Ser101, Asp245, Asp247, and Asp249. Residue Ser101 is modified to Phosphoserine.

This sequence belongs to the phosphohexose mutase family. The cofactor is Mg(2+). Post-translationally, activated by phosphorylation.

It carries out the reaction alpha-D-glucosamine 1-phosphate = D-glucosamine 6-phosphate. Functionally, catalyzes the conversion of glucosamine-6-phosphate to glucosamine-1-phosphate. The sequence is that of Phosphoglucosamine mutase 2 from Shewanella baltica (strain OS185).